The following is a 360-amino-acid chain: Mitogen-activated protein kinase 14 (360 aa).

Residue S2 is modified to N-acetylserine. S2 carries the post-translational modification Phosphoserine. A Phosphothreonine modification is found at T16. A Protein kinase domain is found at 24 to 308 (YQNLSPVGSG…AAQALAHAYF (285 aa)). ATP-binding positions include 30 to 38 (VGSGAYGSV) and K53. K53 carries the N6-acetyllysine modification. The active-site Proton acceptor is D150. K152 carries the N6-acetyllysine modification. T180 carries the post-translational modification Phosphothreonine; by MAP2K3, MAP2K4, MAP2K6 and autocatalysis. A TXY motif is present at residues 180 to 182 (TGY). At Y182 the chain carries Phosphotyrosine; by MAP2K3, MAP2K4, MAP2K6 and autocatalysis. Position 263 is a phosphothreonine (T263). Y323 is modified (phosphotyrosine; by ZAP70).

Belongs to the protein kinase superfamily. CMGC Ser/Thr protein kinase family. MAP kinase subfamily. Component of a signaling complex containing at least AKAP13, PKN1, MAPK14, ZAK and MAP2K3. Within this complex, AKAP13 interacts directly with PKN1, which in turn recruits MAPK14, MAP2K3 and ZAK. Binds to a kinase interaction motif within the protein tyrosine phosphatase, PTPRR. This interaction retains MAPK14 in the cytoplasm and prevents nuclear accumulation. Interacts with SPAG9 and GADD45A. Interacts with CDC25B, CDC25C, DUSP1, DUSP10, DUSP16, NP60, SUPT20H and TAB1. Interacts with casein kinase II subunits CSNK2A1 and CSNK2B. Interacts with PPM1D. Interacts with CDK5RAP3; recruits PPM1D to MAPK14 and may regulate its dephosphorylation. Interacts with DUSP2; this interaction does not lead to catalytic activation of DUSP2 and dephosphrylation of MAPK14. Mg(2+) serves as cofactor. In terms of processing, dually phosphorylated on Thr-180 and Tyr-182 by the MAP2Ks MAP2K3/MKK3, MAP2K4/MKK4 and MAP2K6/MKK6 in response to inflammatory citokines, environmental stress or growth factors, which activates the enzyme. Dual phosphorylation can also be mediated by TAB1-mediated autophosphorylation. TCR engagement in T-cells also leads to Tyr-323 phosphorylation by ZAP70. Dephosphorylated and inactivated by DUPS1, DUSP10 and DUSP16. PPM1D also mediates dephosphorylation and inactivation of MAPK14. Post-translationally, acetylated at Lys-53 and Lys-152 by KAT2B and EP300. Acetylation at Lys-53 increases the affinity for ATP and enhances kinase activity. Lys-53 and Lys-152 are deacetylated by HDAC3. Ubiquitinated. Ubiquitination leads to degradation by the proteasome pathway.

The protein resides in the cytoplasm. It localises to the nucleus. The enzyme catalyses L-seryl-[protein] + ATP = O-phospho-L-seryl-[protein] + ADP + H(+). It catalyses the reaction L-threonyl-[protein] + ATP = O-phospho-L-threonyl-[protein] + ADP + H(+). With respect to regulation, activated by cell stresses such as DNA damage, heat shock, osmotic shock, anisomycin and sodium arsenite, as well as pro-inflammatory stimuli such as bacterial lipopolysaccharide (LPS) and interleukin-1. Activation occurs through dual phosphorylation of Thr-180 and Tyr-182 by either of two dual specificity kinases, MAP2K3/MKK3 or MAP2K6/MKK6, and potentially also MAP2K4/MKK4, as well as by TAB1-mediated autophosphorylation. MAPK14 phosphorylated on both Thr-180 and Tyr-182 is 10-20-fold more active than MAPK14 phosphorylated only on Thr-180, whereas MAPK14 phosphorylated on Tyr-182 alone is inactive. whereas Thr-180 is necessary for catalysis, Tyr-182 may be required for auto-activation and substrate recognition. Phosphorylated at Tyr-323 by ZAP70 in an alternative activation pathway in response to TCR signaling in T-cells. This alternative pathway is inhibited by GADD45A. Inhibited by dual specificity phosphatases, such as DUSP1, DUSP10, and DUSP16. Specifically inhibited by the binding of pyridinyl-imidazole compounds, which are cytokine-suppressive anti-inflammatory drugs (CSAID). SB203580 is an inhibitor of MAPK14. Serine/threonine kinase which acts as an essential component of the MAP kinase signal transduction pathway. MAPK14 is one of the four p38 MAPKs which play an important role in the cascades of cellular responses evoked by extracellular stimuli such as pro-inflammatory cytokines or physical stress leading to direct activation of transcription factors. Accordingly, p38 MAPKs phosphorylate a broad range of proteins and it has been estimated that they may have approximately 200 to 300 substrates each. Some of the targets are downstream kinases which are activated through phosphorylation and further phosphorylate additional targets. RPS6KA5/MSK1 and RPS6KA4/MSK2 can directly phosphorylate and activate transcription factors such as CREB1, ATF1, the NF-kappa-B isoform RELA/NFKB3, STAT1 and STAT3, but can also phosphorylate histone H3 and the nucleosomal protein HMGN1. RPS6KA5/MSK1 and RPS6KA4/MSK2 play important roles in the rapid induction of immediate-early genes in response to stress or mitogenic stimuli, either by inducing chromatin remodeling or by recruiting the transcription machinery. On the other hand, two other kinase targets, MAPKAPK2/MK2 and MAPKAPK3/MK3, participate in the control of gene expression mostly at the post-transcriptional level, by phosphorylating ZFP36 (tristetraprolin) and ELAVL1, and by regulating EEF2K, which is important for the elongation of mRNA during translation. MKNK1/MNK1 and MKNK2/MNK2, two other kinases activated by p38 MAPKs, regulate protein synthesis by phosphorylating the initiation factor EIF4E2. MAPK14 also interacts with casein kinase II, leading to its activation through autophosphorylation and further phosphorylation of TP53/p53. In the cytoplasm, the p38 MAPK pathway is an important regulator of protein turnover. For example, CFLAR is an inhibitor of TNF-induced apoptosis whose proteasome-mediated degradation is regulated by p38 MAPK phosphorylation. In a similar way, MAPK14 phosphorylates the ubiquitin ligase SIAH2, regulating its activity towards EGLN3. MAPK14 may also inhibit the lysosomal degradation pathway of autophagy by interfering with the intracellular trafficking of the transmembrane protein ATG9. Another function of MAPK14 is to regulate the endocytosis of membrane receptors by different mechanisms that impinge on the small GTPase RAB5A. In addition, clathrin-mediated EGFR internalization induced by inflammatory cytokines and UV irradiation depends on MAPK14-mediated phosphorylation of EGFR itself as well as of RAB5A effectors. Ectodomain shedding of transmembrane proteins is regulated by p38 MAPKs as well. In response to inflammatory stimuli, p38 MAPKs phosphorylate the membrane-associated metalloprotease ADAM17. Such phosphorylation is required for ADAM17-mediated ectodomain shedding of TGF-alpha family ligands, which results in the activation of EGFR signaling and cell proliferation. Another p38 MAPK substrate is FGFR1. FGFR1 can be translocated from the extracellular space into the cytosol and nucleus of target cells, and regulates processes such as rRNA synthesis and cell growth. FGFR1 translocation requires p38 MAPK activation. In the nucleus, many transcription factors are phosphorylated and activated by p38 MAPKs in response to different stimuli. Classical examples include ATF1, ATF2, ATF6, ELK1, PTPRH, DDIT3, TP53/p53 and MEF2C and MEF2A. The p38 MAPKs are emerging as important modulators of gene expression by regulating chromatin modifiers and remodelers. The promoters of several genes involved in the inflammatory response, such as IL6, IL8 and IL12B, display a p38 MAPK-dependent enrichment of histone H3 phosphorylation on 'Ser-10' (H3S10ph) in LPS-stimulated myeloid cells. This phosphorylation enhances the accessibility of the cryptic NF-kappa-B-binding sites marking promoters for increased NF-kappa-B recruitment. Phosphorylates CDC25B and CDC25C which is required for binding to 14-3-3 proteins and leads to initiation of a G2 delay after ultraviolet radiation. Phosphorylates TIAR following DNA damage, releasing TIAR from GADD45A mRNA and preventing mRNA degradation. The p38 MAPKs may also have kinase-independent roles, which are thought to be due to the binding to targets in the absence of phosphorylation. Protein O-Glc-N-acylation catalyzed by the OGT is regulated by MAPK14, and, although OGT does not seem to be phosphorylated by MAPK14, their interaction increases upon MAPK14 activation induced by glucose deprivation. This interaction may regulate OGT activity by recruiting it to specific targets such as neurofilament H, stimulating its O-Glc-N-acylation. Required in mid-fetal development for the growth of embryo-derived blood vessels in the labyrinth layer of the placenta. Also plays an essential role in developmental and stress-induced erythropoiesis, through regulation of EPO gene expression. Phosphorylates S100A9 at 'Thr-113'. The sequence is that of Mitogen-activated protein kinase 14 from Canis lupus familiaris (Dog).